We begin with the raw amino-acid sequence, 1063 residues long: Structural polyprotein (1063 aa).

Positions 1 to 131 (MASTTPITME…LGPPTNPFQA (131 aa)) are disordered. The tract at residues 30–69 (GASQSRRPRPPRQRDSSTTGDDSGRDSGGPRRRRGNRGRG) is human C1QBP/SF2P32-binding. Phosphoserine; by host is present on S46. Positions 59-69 (PRRRRGNRGRG) are enriched in basic residues. Basic and acidic residues predominate over residues 70 to 87 (QRRDWSRAPPPPEERQET). Residues 93-107 (APKPSRAPPQQPQPP) show a composition bias toward pro residues. Cysteines 153 and 197 form a disulfide. The segment at 279–300 (GAPQAFLAGLLLAAVAVGTARA) is functions as E2 signal peptide. At 301–534 (GLQPRADMAA…LWLATANALS (234 aa)) the chain is on the extracellular side. Residues N353, N371, N410, and N429 are each glycosylated (N-linked (GlcNAc...) asparagine; by host). A helical membrane pass occupies residues 535–555 (LDHALAAFVLLVPWVLIFMVC). Topologically, residues 556 to 582 (RRTCRRRGAAAALTAVVLQGYNPPAYG) are cytoplasmic. The interval 563–582 (GAAAALTAVVLQGYNPPAYG) is functions as E1 signal peptide. At 583–1028 (EEAFTYLCTA…QTWAEWAAAH (446 aa)) the chain is on the extracellular side. Intrachain disulfides connect C590/C595, C619/C824, C641/C653, C699/C712, C758/C767, C807/C817, C931/C934, and C950/C983. N658 carries an N-linked (GlcNAc...) asparagine; by host glycan. Ca(2+) contacts are provided by N670 and A671. The Ca(2+) site is built by D718 and T719. 2 N-linked (GlcNAc...) asparagine; by host glycosylation sites follow: N759 and N791. Residues T1011 and T1012 are each glycosylated (O-linked (GalNAc...) threonine; by host). A helical transmembrane segment spans residues 1029–1049 (WWQLTLGAICALLLAGLLACC). Residues 1050-1063 (AKCLYYLRGAIAPR) are Extracellular-facing.

Homodimer; further assembles into homooligomer. Interacts with human C1QBP. Interacts (via N-terminus) with protease/methyltransferase p150. In terms of assembly, heterodimer with spike glycoprotein E2. As to quaternary structure, heterodimer with spike glycoprotein E1. Structural polyprotein: Specific enzymatic cleavages in vivo yield mature proteins. Two signal peptidase-mediated cleavages within the polyprotein produce the structural proteins capsid, E2, and E1. The E2 signal peptide remains attached to the C-terminus of the capsid protein after cleavage by the signal peptidase. Another signal peptide at E2 C-terminus directs E1 to the ER, with a similar mechanism. Post-translationally, contains three N-linked oligosaccharides. In terms of processing, capsid is phosphorylated on Ser-46 by host. This phosphorylation negatively regulates capsid protein RNA-binding activity. Dephosphorylated by human PP1A.

The protein resides in the virion. The protein localises to the host cytoplasm. It is found in the host mitochondrion. Its subcellular location is the virion membrane. It localises to the host Golgi apparatus membrane. In terms of biological role, capsid protein interacts with genomic RNA and assembles into icosahedric core particles 65-70 nm in diameter. The resulting nucleocapsid eventually associates with the cytoplasmic domain of E2 at the cell membrane, leading to budding and formation of mature virions from host Golgi membranes. Phosphorylation negatively regulates RNA-binding activity, possibly delaying virion assembly during the viral replication phase. Capsid protein dimerizes and becomes disulfide-linked in the virion. Modulates genomic RNA replication. Modulates subgenomic RNA synthesis by interacting with human C1QBP/SF2P32. Induces both perinuclear clustering of mitochondria and the formation of electron-dense intermitochondrial plaques, both hallmarks of rubella virus infected cells. Induces apoptosis when expressed in transfected cells. Responsible for viral attachment to target host cell, by binding to the cell receptor. Its transport to the plasma membrane depends on interaction with E1 protein. The surface glycoproteins display an irregular helical organization and a pseudo-tetrameric inner nucleocapsid arrangement. Its function is as follows. Class II viral fusion protein. Fusion activity is inactive as long as E1 is bound to E2 in mature virion. After virus attachment to target cell and clathrin-mediated endocytosis, acidification of the endosome would induce dissociation of E1/E2 heterodimer and concomitant trimerization of the E1 subunits. This E1 homotrimer is fusion active, and promotes release of viral nucleocapsid in cytoplasm after endosome and viral membrane fusion. The cytoplasmic tail of spike glycoprotein E1 modulates virus release. The surface glycoproteins display an irregular helical organization and a pseudo-tetrameric inner nucleocapsid arrangement. The polypeptide is Structural polyprotein (Homo sapiens (Human)).